Consider the following 716-residue polypeptide: Beta-1,2-glucosyltransferase (716 aa).

Residues Tyr52, Ile99, Ala101, Glu102, Asn175, Glu176, Gly278, Trp279, Glu343, and Arg349 each coordinate sophorose. Catalysis depends on Glu176, which acts as the Proton donor/acceptor. Beta-D-glucose contacts are provided by Glu176, Gly278, and Trp279. The active-site Nucleophile is the Glu343. Beta-D-glucose is bound by residues Arg349, Lys358, and Glu361. Tyr378 serves as a coordination point for sophorose. Positions 708 and 709 each coordinate beta-D-glucose.

This sequence belongs to the glycosyl hydrolase 35 family. As to quaternary structure, homidimer.

It is found in the cytoplasm. It catalyses the reaction a D-glucoside + [(1-&gt;2)-beta-D-glucosyl](n) = a beta-D-glucosyl-(1-&gt;2)-D-glucoside + [(1-&gt;2)-beta-D-glucosyl](n-1). Functionally, glycosyltransferase acting on beta-1,2-glucooligosaccharides. Catalyzes the transfer of a glucosyl residue from the non-reducing end of a 1,2-beta-D-glucan to a glucose residue of an acceptor molecule, forming a beta-1,2-glucosidic bond. The beta-1,2-linked glucose dimer sophorose is the preferred donor in vitro. Has a very broad specificity for the acceptor and can act on various aryl- and alkyl-glucosides. Does not show any hydrolytic activity. The polypeptide is Beta-1,2-glucosyltransferase (Ignavibacterium album (strain DSM 19864 / JCM 16511 / NBRC 101810 / Mat9-16)).